The chain runs to 266 residues: 22 kDa alpha-zein 8 (266 aa).

The N-terminal stretch at 1 to 21 (MATKILALLALLALFVSATNA) is a signal peptide.

Belongs to the zein family.

Functionally, zeins are major seed storage proteins. This chain is 22 kDa alpha-zein 8, found in Zea mays (Maize).